The primary structure comprises 425 residues: Serine hydroxymethyltransferase 2 (425 aa).

(6S)-5,6,7,8-tetrahydrofolate-binding positions include Leu-121 and 125 to 127 (GHL). At Lys-230 the chain carries N6-(pyridoxal phosphate)lysine.

It belongs to the SHMT family. Homodimer. Requires pyridoxal 5'-phosphate as cofactor.

The protein resides in the cytoplasm. It catalyses the reaction (6R)-5,10-methylene-5,6,7,8-tetrahydrofolate + glycine + H2O = (6S)-5,6,7,8-tetrahydrofolate + L-serine. Its pathway is one-carbon metabolism; tetrahydrofolate interconversion. It participates in amino-acid biosynthesis; glycine biosynthesis; glycine from L-serine: step 1/1. Catalyzes the reversible interconversion of serine and glycine with tetrahydrofolate (THF) serving as the one-carbon carrier. This reaction serves as the major source of one-carbon groups required for the biosynthesis of purines, thymidylate, methionine, and other important biomolecules. Also exhibits THF-independent aldolase activity toward beta-hydroxyamino acids, producing glycine and aldehydes, via a retro-aldol mechanism. The protein is Serine hydroxymethyltransferase 2 of Mycobacterium tuberculosis (strain CDC 1551 / Oshkosh).